Consider the following 460-residue polypeptide: 3'3'-cGAMP-specific phosphodiesterase 3 (460 aa).

Positions 28-189 (PPEHCIRCCW…IPLFSRIALL (162 aa)) constitute an HD domain. The HD-GYP domain maps to 260–455 (DDAYLECIVT…LPDEYTQLPH (196 aa)). Residues His-317 and Asp-318 each coordinate a divalent metal cation. Lys-321 serves as the catalytic Proton donor. The a divalent metal cation site is built by His-346, His-370, His-371, and Asp-399.

Monomer. Mn(2+) is required as a cofactor.

It catalyses the reaction 3',3'-cGAMP + H2O = 5'-pApG-3' + H(+). Its function is as follows. Phosphodiesterase (PDE) that catalyzes the hydrolysis of 3'3'-cyclic GMP-AMP (3'3'-cGAMP), leading to linear 5'-pApG. Counteracts the function of the 3'3'-cGAMP synthase DncV, and is involved in the modulation of intracellular 3'3'-cGAMP levels. Enhances bacterial chemotaxis and inhibits intestinal colonization in vivo. Thus exerts a crucial role in regulating bacterial infectivity through catalyzing 3'3'-cGAMP degradation. Is specific for 3'3'-cGAMP since it cannot degrade other cGAMP linkage isomers (3'2'-, 2'3'-, and 2'2'-cGAMPs); is also able to hydrolyze c-di-GMP but not c-di-AMP. The protein is 3'3'-cGAMP-specific phosphodiesterase 3 of Vibrio cholerae serotype O1 (strain ATCC 39315 / El Tor Inaba N16961).